Consider the following 243-residue polypeptide: ATP synthase subunit a (243 aa).

Helical transmembrane passes span 29-49, 54-74, 89-109, 114-134, 144-164, 182-202, and 208-228; these read NASL…YIGL, IIPN…VSTI, VFTI…PLGF, HIAV…IIGF, ILLP…IELF, IAGH…NIFL, and IFII…AYIF.

It belongs to the ATPase A chain family. In terms of assembly, F-type ATPases have 2 components, CF(1) - the catalytic core - and CF(0) - the membrane proton channel. CF(1) has five subunits: alpha(3), beta(3), gamma(1), delta(1), epsilon(1). CF(0) has three main subunits: a(1), b(2) and c(9-12). The alpha and beta chains form an alternating ring which encloses part of the gamma chain. CF(1) is attached to CF(0) by a central stalk formed by the gamma and epsilon chains, while a peripheral stalk is formed by the delta and b chains.

The protein resides in the cell inner membrane. In terms of biological role, key component of the proton channel; it plays a direct role in the translocation of protons across the membrane. The sequence is that of ATP synthase subunit a from Ehrlichia canis (strain Jake).